A 122-amino-acid polypeptide reads, in one-letter code: Secreted RxLR effector protein 80 (122 aa).

The signal sequence occupies residues 1 to 21 (MKKRALPIVIFVISLQQSSQS). Residues 72 to 75 (RSLR) carry the RxLR motif.

This sequence belongs to the RxLR effector family.

The protein localises to the secreted. The protein resides in the host endoplasmic reticulum membrane. Functionally, secreted effector that dos not suppress the host cell death induced by cell death-inducing proteins. In Plasmopara viticola (Downy mildew of grapevine), this protein is Secreted RxLR effector protein 80.